The chain runs to 588 residues: Aspartate--tRNA ligase (588 aa).

Glu172 contacts L-aspartate. The segment at 196–199 (QLFK) is aspartate. Arg218 serves as a coordination point for L-aspartate. ATP-binding positions include 218–220 (RDE) and Gln227. His449 lines the L-aspartate pocket. Position 483 (Glu483) interacts with ATP. Arg490 is an L-aspartate binding site. 535–538 (GLDR) is an ATP binding site.

It belongs to the class-II aminoacyl-tRNA synthetase family. Type 1 subfamily. Homodimer.

The protein localises to the cytoplasm. It catalyses the reaction tRNA(Asp) + L-aspartate + ATP = L-aspartyl-tRNA(Asp) + AMP + diphosphate. In terms of biological role, catalyzes the attachment of L-aspartate to tRNA(Asp) in a two-step reaction: L-aspartate is first activated by ATP to form Asp-AMP and then transferred to the acceptor end of tRNA(Asp). In Haemophilus influenzae (strain ATCC 51907 / DSM 11121 / KW20 / Rd), this protein is Aspartate--tRNA ligase.